Reading from the N-terminus, the 229-residue chain is Triosephosphate isomerase (229 aa).

Position 16–18 (asparagine 16–lysine 18) interacts with substrate. The active-site Electrophile is the histidine 100. The Proton acceptor role is filled by glutamate 148. Residues isoleucine 153, glycine 188, and alanine 209–serine 210 each bind substrate.

This sequence belongs to the triosephosphate isomerase family. In terms of assembly, homotetramer; dimer of dimers.

Its subcellular location is the cytoplasm. The enzyme catalyses D-glyceraldehyde 3-phosphate = dihydroxyacetone phosphate. Its pathway is carbohydrate biosynthesis; gluconeogenesis. It participates in carbohydrate degradation; glycolysis; D-glyceraldehyde 3-phosphate from glycerone phosphate: step 1/1. In terms of biological role, involved in the gluconeogenesis. Catalyzes stereospecifically the conversion of dihydroxyacetone phosphate (DHAP) to D-glyceraldehyde-3-phosphate (G3P). In Methanothermobacter thermautotrophicus (strain ATCC 29096 / DSM 1053 / JCM 10044 / NBRC 100330 / Delta H) (Methanobacterium thermoautotrophicum), this protein is Triosephosphate isomerase.